The primary structure comprises 244 residues: uncharacterized protein (244 aa).

Positions 1–18 (MQFSVLCKFLLLVTAVMA) are cleaved as a signal peptide. The Lumenal segment spans residues 19–223 (QTEYTPGFTT…TTIPSSAVHY (205 aa)). Low complexity-rich tracts occupy residues 55–65 (ETSTHSVTSTN) and 75–128 (TSHN…TTHV). A disordered region spans residues 55–128 (ETSTHSVTST…TTVVPPTTHV (74 aa)). A helical transmembrane segment spans residues 224-244 (ASPSGLLALVVMLISAFAFLA).

Its subcellular location is the endoplasmic reticulum membrane. This is an uncharacterized protein from Schizosaccharomyces pombe (strain 972 / ATCC 24843) (Fission yeast).